Here is a 443-residue protein sequence, read N- to C-terminus: Anthocyanidin 3-O-glucoside 5-O-glucosyltransferase 2 (443 aa).

The N-terminal stretch at 1–22 is a signal peptide; the sequence is MVRRRVLLATFPAQGHINPALQ. The active-site Proton acceptor is histidine 16. An anthocyanidin is bound at residue histidine 16. The UDP-alpha-D-glucose site is built by glutamine 340, histidine 355, tryptophan 358, asparagine 359, serine 360, glutamate 363, aspartate 379, and glutamine 380.

This sequence belongs to the UDP-glycosyltransferase family.

It catalyses the reaction an anthocyanidin 3-O-beta-D-glucoside + UDP-alpha-D-glucose = an anthocyanidin 3,5-di-O-beta-D-glucoside + UDP + 2 H(+). It functions in the pathway pigment biosynthesis; anthocyanin biosynthesis. Functionally, catalyzes the glucosylation at the O-5 position of anthocyanidin 3-glucosides to form anthocyanidin 3,5-di-O-glucosides using UDP-glucose as sugar donor. Anthocyanidin 3,5-di-O-glucosides are molecules that are responsible for pigmentation. Also acts on anthocyanidin 3-O-(6-O-malonylglucoside). Much less active with hydroxycinnamoylglucose derivatives. No activity in the absence of the 3-O-glucoside group. This chain is Anthocyanidin 3-O-glucoside 5-O-glucosyltransferase 2 (PF3R6), found in Perilla frutescens (Beefsteak mint).